The primary structure comprises 231 residues: 5'-methylthioadenosine/S-adenosylhomocysteine nucleosidase (231 aa).

E12 (proton acceptor) is an active-site residue. Residues G78, V153, and 174–175 (ME) contribute to the substrate site. D198 (proton donor) is an active-site residue.

The protein belongs to the PNP/UDP phosphorylase family. MtnN subfamily.

The enzyme catalyses S-adenosyl-L-homocysteine + H2O = S-(5-deoxy-D-ribos-5-yl)-L-homocysteine + adenine. It carries out the reaction S-methyl-5'-thioadenosine + H2O = 5-(methylsulfanyl)-D-ribose + adenine. It catalyses the reaction 5'-deoxyadenosine + H2O = 5-deoxy-D-ribose + adenine. Its pathway is amino-acid biosynthesis; L-methionine biosynthesis via salvage pathway; S-methyl-5-thio-alpha-D-ribose 1-phosphate from S-methyl-5'-thioadenosine (hydrolase route): step 1/2. In terms of biological role, catalyzes the irreversible cleavage of the glycosidic bond in both 5'-methylthioadenosine (MTA) and S-adenosylhomocysteine (SAH/AdoHcy) to adenine and the corresponding thioribose, 5'-methylthioribose and S-ribosylhomocysteine, respectively. Also cleaves 5'-deoxyadenosine, a toxic by-product of radical S-adenosylmethionine (SAM) enzymes, into 5-deoxyribose and adenine. In Vibrio vulnificus (strain YJ016), this protein is 5'-methylthioadenosine/S-adenosylhomocysteine nucleosidase.